Here is a 309-residue protein sequence, read N- to C-terminus: Ribonuclease Z (309 aa).

Residues H63, H65, D67, H68, H145, D216, and H274 each coordinate Zn(2+). D67 acts as the Proton acceptor in catalysis.

The protein belongs to the RNase Z family. Homodimer. The cofactor is Zn(2+).

The enzyme catalyses Endonucleolytic cleavage of RNA, removing extra 3' nucleotides from tRNA precursor, generating 3' termini of tRNAs. A 3'-hydroxy group is left at the tRNA terminus and a 5'-phosphoryl group is left at the trailer molecule.. In terms of biological role, zinc phosphodiesterase, which displays some tRNA 3'-processing endonuclease activity. Probably involved in tRNA maturation, by removing a 3'-trailer from precursor tRNA. The chain is Ribonuclease Z from Streptococcus pyogenes serotype M6 (strain ATCC BAA-946 / MGAS10394).